Reading from the N-terminus, the 141-residue chain is Large ribosomal subunit protein uL11c (141 aa).

It belongs to the universal ribosomal protein uL11 family. In terms of assembly, part of the ribosomal stalk of the 50S ribosomal subunit. Interacts with L10 and the large rRNA to form the base of the stalk. L10 forms an elongated spine to which L12 dimers bind in a sequential fashion forming a multimeric L10(L12)X complex.

The protein localises to the plastid. Its subcellular location is the chloroplast. In terms of biological role, forms part of the ribosomal stalk which helps the ribosome interact with GTP-bound translation factors. The chain is Large ribosomal subunit protein uL11c from Cyanidium caldarium (Red alga).